A 452-amino-acid polypeptide reads, in one-letter code: NADH-ubiquinone oxidoreductase chain 4 (452 aa).

The next 14 membrane-spanning stretches (helical) occupy residues 7–27, 57–77, 95–115, 116–136, 145–165, 186–206, 218–238, 251–271, 278–298, 303–323, 336–356, 360–380, 386–406, and 428–448; these read VLMSLLLLPLIVNLYPWIIAL, MMSFTLSALTIWVTVMMILAS, VILLIILINCFLSPNLIMFYI, WFEASLIPTMVLIMTWGYQPE, MIYTVAASLPMLMVLCKIFIV, MALAWVLTLGGFLVKLPMFTV, PIAGSMILAAILLKLGGYGIL, TSSLLSSVALVGAVSTSLICL, SLIAYSSVGHMGLMVAGALMS, FQAALAMMIAHGLSSSALFVM, LFLMKGLLVLAPTLTMWWFLF, NMAAPPSINLLSEIMLITSIL, AFILLGLTSFFTAAYCLYMYT, and LTLMTMHLVPTILIIFKPELI.

Belongs to the complex I subunit 4 family.

It localises to the mitochondrion membrane. It carries out the reaction a ubiquinone + NADH + 5 H(+)(in) = a ubiquinol + NAD(+) + 4 H(+)(out). In terms of biological role, core subunit of the mitochondrial membrane respiratory chain NADH dehydrogenase (Complex I) that is believed to belong to the minimal assembly required for catalysis. Complex I functions in the transfer of electrons from NADH to the respiratory chain. The immediate electron acceptor for the enzyme is believed to be ubiquinone. The sequence is that of NADH-ubiquinone oxidoreductase chain 4 (ND4) from Lumbricus terrestris (Common earthworm).